Here is a 401-residue protein sequence, read N- to C-terminus: MQCRKCCFACEKWCFIGAKAFLPLVVNFLIIWACWVHAWLVCWEPQLFESDTTFWRVYGVAGVAIGIMCNVLYLKVCKVGPGSPTDIDNFSVPLVEYQNACSAEGQHLTPPREMANSVCAKENGGLRFCTKCIGWKPDRSHHCSNYKRCVLKFDHYCPWFATAIGFHNHKYFVLFLWYVTILCFFCLGSTGFVFYNHILEIGAMRGPDGNTDYVGAISVNVMILMVLALVFAIAVGTFATFSLYLVFNNQSTVEFLESTQYRSAVPTAAYRYTFAPTSKTVGNVFDVGWKRNFQLVMGDKWWMWLLPIQPSEAARGNGTQFPLNKQVLQKIREAAAKEVQIRDQNQAYIKQQRQQQQKRTQYDLPQHLQPPPQEHYEYDDEAQDSGDDIPLINMVNKNNTK.

At 1–20 the chain is on the cytoplasmic side; it reads MQCRKCCFACEKWCFIGAKA. The helical transmembrane segment at 21–41 threads the bilayer; that stretch reads FLPLVVNFLIIWACWVHAWLV. The Lumenal segment spans residues 42–56; it reads CWEPQLFESDTTFWR. Residues 57-77 form a helical membrane-spanning segment; the sequence is VYGVAGVAIGIMCNVLYLKVC. The Cytoplasmic portion of the chain corresponds to 78 to 171; that stretch reads KVGPGSPTDI…TAIGFHNHKY (94 aa). Residues 127–177 enclose the DHHC domain; that stretch reads RFCTKCIGWKPDRSHHCSNYKRCVLKFDHYCPWFATAIGFHNHKYFVLFLW. Cys157 serves as the catalytic S-palmitoyl cysteine intermediate. Residues 172–192 traverse the membrane as a helical segment; the sequence is FVLFLWYVTILCFFCLGSTGF. At 193 to 220 the chain is on the lumenal side; sequence VFYNHILEIGAMRGPDGNTDYVGAISVN. Residues 221 to 241 traverse the membrane as a helical segment; sequence VMILMVLALVFAIAVGTFATF. Over 242–401 the chain is Cytoplasmic; it reads SLYLVFNNQS…INMVNKNNTK (160 aa). Residues 351-367 show a composition bias toward low complexity; that stretch reads QQRQQQQKRTQYDLPQH. The tract at residues 351 to 401 is disordered; the sequence is QQRQQQQKRTQYDLPQHLQPPPQEHYEYDDEAQDSGDDIPLINMVNKNNTK. A compositionally biased stretch (acidic residues) spans 377-387; the sequence is EYDDEAQDSGD.

The protein belongs to the DHHC palmitoyltransferase family. PFA3 subfamily.

Its subcellular location is the vacuole membrane. The catalysed reaction is L-cysteinyl-[protein] + hexadecanoyl-CoA = S-hexadecanoyl-L-cysteinyl-[protein] + CoA. Palmitoyltransferase specific for VAC8. Palmitoylates VAC8 at one or more of its N-terminal cysteine residues, which is required for its proper membrane localization. The chain is Palmitoyltransferase PFA3 (PFA3) from Yarrowia lipolytica (strain CLIB 122 / E 150) (Yeast).